The sequence spans 107 residues: Precursor of CEP14 (107 aa).

Positions 1–21 (MAVRLIPTIWLFIVFAVIVSA) are cleaved as a signal peptide. A propeptide spanning residues 22 to 92 (LPSLVSSRKL…GKLRSRHLST (71 aa)) is cleaved from the precursor. The N-linked (GlcNAc...) asparagine glycan is linked to Asn-39. The disordered stretch occupies residues 43 to 76 (REEEKSHMPHVTKTSTLSALPKGKIPNSTPSKKG). 2 positions are modified to hydroxyproline: Pro-101 and Pro-103.

This sequence belongs to the C-terminally encoded plant signaling peptide (CEP) family. Interacts with CEP receptors (e.g. CEPR1 and CEPR2). Post-translationally, the mature small signaling peptide is generated by proteolytic processing of the longer precursor.

The protein resides in the secreted. Its subcellular location is the extracellular space. The protein localises to the apoplast. Functionally, extracellular signaling peptide that may regulate primary root growth rate and systemic nitrogen (N)-demand signaling. The protein is Precursor of CEP14 of Arabidopsis thaliana (Mouse-ear cress).